A 401-amino-acid chain; its full sequence is Imidazolonepropionase (401 aa).

Residues His-70 and His-72 each contribute to the Fe(3+) site. Zn(2+) is bound by residues His-70 and His-72. 4-imidazolone-5-propanoate is bound by residues Arg-79, Tyr-142, and His-175. Position 142 (Tyr-142) interacts with N-formimidoyl-L-glutamate. His-240 provides a ligand contact to Fe(3+). His-240 lines the Zn(2+) pocket. Gln-243 lines the 4-imidazolone-5-propanoate pocket. Fe(3+) is bound at residue Asp-315. Asp-315 provides a ligand contact to Zn(2+). The N-formimidoyl-L-glutamate site is built by Asn-317 and Gly-319. Thr-320 lines the 4-imidazolone-5-propanoate pocket.

It belongs to the metallo-dependent hydrolases superfamily. HutI family. Requires Zn(2+) as cofactor. It depends on Fe(3+) as a cofactor.

Its subcellular location is the cytoplasm. It catalyses the reaction 4-imidazolone-5-propanoate + H2O = N-formimidoyl-L-glutamate. The protein operates within amino-acid degradation; L-histidine degradation into L-glutamate; N-formimidoyl-L-glutamate from L-histidine: step 3/3. In terms of biological role, catalyzes the hydrolytic cleavage of the carbon-nitrogen bond in imidazolone-5-propanoate to yield N-formimidoyl-L-glutamate. It is the third step in the universal histidine degradation pathway. The sequence is that of Imidazolonepropionase from Caulobacter sp. (strain K31).